A 528-amino-acid polypeptide reads, in one-letter code: NAD(P)H-quinone oxidoreductase chain 4 1 (528 aa).

The next 14 membrane-spanning stretches (helical) occupy residues 7-27 (FPWL…IPLI), 32-52 (WVRW…AYVF), 86-106 (LSLP…VAAW), 114-134 (LFFF…LAQD), 136-156 (LLFF…ISIW), 168-188 (FILY…AMAF), 208-228 (ALEL…LPIF), 242-262 (SAPI…YGLI), 276-296 (FAPV…LAAF), 310-330 (IAHM…GING), 331-351 (AVLQ…LTGI), 375-395 (FALF…SGFV), 417-437 (GIAL…LSML), and 463-483 (MAVA…PRLA).

Belongs to the complex I subunit 4 family.

The protein localises to the cellular thylakoid membrane. It carries out the reaction a plastoquinone + NADH + (n+1) H(+)(in) = a plastoquinol + NAD(+) + n H(+)(out). The catalysed reaction is a plastoquinone + NADPH + (n+1) H(+)(in) = a plastoquinol + NADP(+) + n H(+)(out). Functionally, NDH-1 shuttles electrons from NAD(P)H, via FMN and iron-sulfur (Fe-S) centers, to quinones in the respiratory chain. The immediate electron acceptor for the enzyme in this species is believed to be plastoquinone. Couples the redox reaction to proton translocation (for every two electrons transferred, four hydrogen ions are translocated across the cytoplasmic membrane), and thus conserves the redox energy in a proton gradient. This is NAD(P)H-quinone oxidoreductase chain 4 1 from Synechococcus sp. (strain JA-2-3B'a(2-13)) (Cyanobacteria bacterium Yellowstone B-Prime).